The sequence spans 136 residues: MTDTTYDNSTELDPRIAARLKRDVKGLVAAVIQQYDTHEVLMVGYMNDEALRRTLTTGRVTFWSRSRQEYWRKGDTSGHVQYVKGVSLDCDGDALLVEVDQVGAACHTGKRSCFLEGGPLPVVEGHRPAEQQNGLS.

Asp89 is a binding site for Mg(2+). Residue Cys90 coordinates Zn(2+). Residues Asp91 and Asp93 each coordinate Mg(2+). Zn(2+) contacts are provided by Cys106 and Cys113.

Belongs to the PRA-CH family. As to quaternary structure, homodimer. It depends on Mg(2+) as a cofactor. Zn(2+) is required as a cofactor.

Its subcellular location is the cytoplasm. The enzyme catalyses 1-(5-phospho-beta-D-ribosyl)-5'-AMP + H2O = 1-(5-phospho-beta-D-ribosyl)-5-[(5-phospho-beta-D-ribosylamino)methylideneamino]imidazole-4-carboxamide. It functions in the pathway amino-acid biosynthesis; L-histidine biosynthesis; L-histidine from 5-phospho-alpha-D-ribose 1-diphosphate: step 3/9. In terms of biological role, catalyzes the hydrolysis of the adenine ring of phosphoribosyl-AMP. In Bifidobacterium longum subsp. infantis (strain ATCC 15697 / DSM 20088 / JCM 1222 / NCTC 11817 / S12), this protein is Phosphoribosyl-AMP cyclohydrolase.